A 573-amino-acid polypeptide reads, in one-letter code: uncharacterized protein (573 aa).

One can recognise an ABC transmembrane type-1 domain in the interval alanine 15 to arginine 298. 6 helical membrane-spanning segments follow: residues isoleucine 17–alanine 37, valine 52–leucine 72, isoleucine 127–leucine 147, valine 153–valine 173, phenylalanine 238–glycine 258, and isoleucine 275–isoleucine 295. Positions isoleucine 330–serine 563 constitute an ABC transporter domain. Glycine 364–serine 371 contacts ATP.

This sequence belongs to the ABC transporter superfamily.

Its subcellular location is the cell membrane. This is an uncharacterized protein from Bacillus subtilis (strain 168).